The following is an 89-amino-acid chain: Small ribosomal subunit protein uS15 (89 aa).

This sequence belongs to the universal ribosomal protein uS15 family. In terms of assembly, part of the 30S ribosomal subunit. Forms a bridge to the 50S subunit in the 70S ribosome, contacting the 23S rRNA.

Functionally, one of the primary rRNA binding proteins, it binds directly to 16S rRNA where it helps nucleate assembly of the platform of the 30S subunit by binding and bridging several RNA helices of the 16S rRNA. Its function is as follows. Forms an intersubunit bridge (bridge B4) with the 23S rRNA of the 50S subunit in the ribosome. The polypeptide is Small ribosomal subunit protein uS15 (Syntrophobacter fumaroxidans (strain DSM 10017 / MPOB)).